The following is a 179-amino-acid chain: GTP-dependent dephospho-CoA kinase (179 aa).

The GTP site is built by Asp50, Val51, Val52, Asp69, Lys71, and Glu126.

The protein belongs to the GTP-dependent DPCK family.

It catalyses the reaction 3'-dephospho-CoA + GTP = GDP + CoA + H(+). It functions in the pathway cofactor biosynthesis; coenzyme A biosynthesis. Its function is as follows. Catalyzes the GTP-dependent phosphorylation of the 3'-hydroxyl group of dephosphocoenzyme A to form coenzyme A (CoA). The protein is GTP-dependent dephospho-CoA kinase of Pyrococcus horikoshii (strain ATCC 700860 / DSM 12428 / JCM 9974 / NBRC 100139 / OT-3).